Reading from the N-terminus, the 414-residue chain is Putative truncated GMC-type inactive oxidoreductase R832 (414 aa).

An N-terminal signal peptide occupies residues methionine 1 to alanine 20. Aspartate 38 to arginine 67 provides a ligand contact to FAD.

It belongs to the GMC oxidoreductase family. Requires FAD as cofactor.

This Acanthamoeba polyphaga (Amoeba) protein is Putative truncated GMC-type inactive oxidoreductase R832.